A 468-amino-acid polypeptide reads, in one-letter code: Interleukin-9 receptor (468 aa).

Positions 1 to 37 are cleaved as a signal peptide; that stretch reads MALGRCIAEGWTLERVAVKQVSWFLIYSWVCSGVCRG. The Extracellular segment spans residues 38 to 270; the sequence is VSVPEQGGGG…GLLVPRWQWS (233 aa). Residues Asn-116 and Asn-155 are each glycosylated (N-linked (GlcNAc...) asparagine). The Fibronectin type-III domain occupies 148–256; the sequence is PPSDLQSNVS…WSQPVSFPSP (109 aa). Positions 244–248 match the WSXWS motif motif; that stretch reads WSEWS. A helical membrane pass occupies residues 271 to 291; the sequence is ASILVVVPIFLLLTGFVHLLF. Residues 292–468 lie on the Cytoplasmic side of the membrane; it reads KLSPRLKRIF…PVALPVSSRA (177 aa). A Box 1 motif motif is present at residues 301 to 309; sequence FYQNIPSPE. The interval 407-426 is disordered; it reads PQEDWAPLGSARPPPPDSDS.

Belongs to the type I cytokine receptor family. Type 4 subfamily. As to quaternary structure, interacts with IL9.

The protein resides in the cell membrane. The protein localises to the secreted. Its function is as follows. Plays an important role in the immune response against parasites by acting as a receptor of IL9. The sequence is that of Interleukin-9 receptor (Il9r) from Mus musculus (Mouse).